Here is a 358-residue protein sequence, read N- to C-terminus: Phospho-N-acetylmuramoyl-pentapeptide-transferase (358 aa).

10 helical membrane passes run 28–48 (WALA…IAWL), 72–92 (TMGG…WADL), 96–116 (YIWL…LDDY), 133–153 (FLWQ…LPAY), 164–184 (GLTP…MVGS), 196–216 (GLAI…IYVA), 233–253 (VGEV…FLWF), 260–280 (VFMG…LAVL), 285–305 (LLLL…ILQV), and 335–355 (KIII…LSVL).

Belongs to the glycosyltransferase 4 family. MraY subfamily. Requires Mg(2+) as cofactor.

It localises to the cell inner membrane. It carries out the reaction UDP-N-acetyl-alpha-D-muramoyl-L-alanyl-gamma-D-glutamyl-meso-2,6-diaminopimeloyl-D-alanyl-D-alanine + di-trans,octa-cis-undecaprenyl phosphate = di-trans,octa-cis-undecaprenyl diphospho-N-acetyl-alpha-D-muramoyl-L-alanyl-D-glutamyl-meso-2,6-diaminopimeloyl-D-alanyl-D-alanine + UMP. It participates in cell wall biogenesis; peptidoglycan biosynthesis. Its function is as follows. Catalyzes the initial step of the lipid cycle reactions in the biosynthesis of the cell wall peptidoglycan: transfers peptidoglycan precursor phospho-MurNAc-pentapeptide from UDP-MurNAc-pentapeptide onto the lipid carrier undecaprenyl phosphate, yielding undecaprenyl-pyrophosphoryl-MurNAc-pentapeptide, known as lipid I. The chain is Phospho-N-acetylmuramoyl-pentapeptide-transferase from Nitratidesulfovibrio vulgaris (strain ATCC 29579 / DSM 644 / CCUG 34227 / NCIMB 8303 / VKM B-1760 / Hildenborough) (Desulfovibrio vulgaris).